We begin with the raw amino-acid sequence, 336 residues long: Aspartate carbamoyltransferase catalytic subunit (336 aa).

Residues Arg72 and Thr73 each coordinate carbamoyl phosphate. Lys100 is a binding site for L-aspartate. Residues Arg122, His152, and Gln155 each coordinate carbamoyl phosphate. L-aspartate-binding residues include Arg185 and Arg240. Carbamoyl phosphate contacts are provided by Gly281 and Pro282.

Belongs to the aspartate/ornithine carbamoyltransferase superfamily. ATCase family. In terms of assembly, heterododecamer (2C3:3R2) of six catalytic PyrB chains organized as two trimers (C3), and six regulatory PyrI chains organized as three dimers (R2).

The enzyme catalyses carbamoyl phosphate + L-aspartate = N-carbamoyl-L-aspartate + phosphate + H(+). It functions in the pathway pyrimidine metabolism; UMP biosynthesis via de novo pathway; (S)-dihydroorotate from bicarbonate: step 2/3. Functionally, catalyzes the condensation of carbamoyl phosphate and aspartate to form carbamoyl aspartate and inorganic phosphate, the committed step in the de novo pyrimidine nucleotide biosynthesis pathway. The chain is Aspartate carbamoyltransferase catalytic subunit from Marinobacter nauticus (strain ATCC 700491 / DSM 11845 / VT8) (Marinobacter aquaeolei).